Here is a 469-residue protein sequence, read N- to C-terminus: Glutamate--tRNA ligase (469 aa).

The 'HIGH' region motif lies at 11-21 (PSPTGFIHLGN). Residues 118-131 (GEKPRYDGTWRPEP) show a composition bias toward basic and acidic residues. The segment at 118-138 (GEKPRYDGTWRPEPGKVLPEP) is disordered. A 'KMSKS' region motif is present at residues 243 to 247 (KMSKR). Lys-246 serves as a coordination point for ATP.

This sequence belongs to the class-I aminoacyl-tRNA synthetase family. Glutamate--tRNA ligase type 1 subfamily. As to quaternary structure, monomer.

The protein localises to the cytoplasm. It carries out the reaction tRNA(Glu) + L-glutamate + ATP = L-glutamyl-tRNA(Glu) + AMP + diphosphate. Its function is as follows. Catalyzes the attachment of glutamate to tRNA(Glu) in a two-step reaction: glutamate is first activated by ATP to form Glu-AMP and then transferred to the acceptor end of tRNA(Glu). The protein is Glutamate--tRNA ligase of Burkholderia thailandensis (strain ATCC 700388 / DSM 13276 / CCUG 48851 / CIP 106301 / E264).